The primary structure comprises 491 residues: Zinc finger and SCAN domain-containing protein 22 (491 aa).

Ser-9 carries the post-translational modification Phosphoserine. Positions 49 to 131 (RLRFRHFRYE…VLVEDLTQVL (83 aa)) constitute an SCAN box domain. Disordered stretches follow at residues 134 to 161 (RGWD…SNVT) and 204 to 249 (FKKT…DKFD). Residues 214-224 (VPTDQRGRESG) are compositionally biased toward basic and acidic residues. Polar residues predominate over residues 225-241 (ASRNSSSAWPNLTSQEK). C2H2-type zinc fingers lie at residues 268–290 (SKCR…QKTH), 296–318 (YACS…QVVH), 324–346 (HECK…QRIH), 352–374 (YKCG…QRVH), 380–402 (YECD…QRIH), 408–430 (YKCD…LRIH), 436–458 (YQCK…QRIH), and 464–486 (YKCS…LRIH). Residue Lys-443 forms a Glycyl lysine isopeptide (Lys-Gly) (interchain with G-Cter in SUMO2) linkage.

It belongs to the krueppel C2H2-type zinc-finger protein family.

The protein localises to the nucleus. Its function is as follows. May be involved in transcriptional regulation. In Homo sapiens (Human), this protein is Zinc finger and SCAN domain-containing protein 22 (ZSCAN22).